The chain runs to 335 residues: Beta-ketoacyl-[acyl-carrier-protein] synthase III (335 aa).

Catalysis depends on residues Cys-116 and His-256. Positions 257 to 261 are ACP-binding; sequence QANLR. Residue Asn-286 is part of the active site.

The protein belongs to the thiolase-like superfamily. FabH family. As to quaternary structure, homodimer.

It localises to the cytoplasm. It carries out the reaction malonyl-[ACP] + acetyl-CoA + H(+) = 3-oxobutanoyl-[ACP] + CO2 + CoA. It functions in the pathway lipid metabolism; fatty acid biosynthesis. Catalyzes the condensation reaction of fatty acid synthesis by the addition to an acyl acceptor of two carbons from malonyl-ACP. Catalyzes the first condensation reaction which initiates fatty acid synthesis and may therefore play a role in governing the total rate of fatty acid production. Possesses both acetoacetyl-ACP synthase and acetyl transacylase activities. Its substrate specificity determines the biosynthesis of branched-chain and/or straight-chain of fatty acids. This is Beta-ketoacyl-[acyl-carrier-protein] synthase III from Porphyromonas gingivalis (strain ATCC BAA-308 / W83).